We begin with the raw amino-acid sequence, 201 residues long: ADP-ribosylation factor-like protein 4D (201 aa).

Glycine 2 carries the N-myristoyl glycine lipid modification. Residues glycine 28 to threonine 35, aspartate 76 to glutamine 80, and asparagine 135 to aspartate 138 contribute to the GTP site.

It belongs to the small GTPase superfamily. Arf family. As to quaternary structure, interacts with CYTH2; the interaction is direct and ARL4D GTP-dependent. Does not interact with ARL4D.

It localises to the nucleus. Its subcellular location is the nucleolus. The protein resides in the cell membrane. It is found in the cytoplasm. Small GTP-binding protein which cycles between an inactive GDP-bound and an active GTP-bound form, and the rate of cycling is regulated by guanine nucleotide exchange factors (GEF) and GTPase-activating proteins (GAP). GTP-binding protein that does not act as an allosteric activator of the cholera toxin catalytic subunit. Recruits CYTH1, CYTH2, CYTH3 and CYTH4 to the plasma membrane in GDP-bound form. The polypeptide is ADP-ribosylation factor-like protein 4D (ARL4D) (Homo sapiens (Human)).